The following is a 522-amino-acid chain: Gypsy retrotransposon integrase-like protein 1 (522 aa).

The 158-residue stretch at 135 to 292 folds into the Integrase catalytic domain; that stretch reads KVENPWSLVT…TPYFQMFSRN (158 aa). Residue serine 502 is modified to Phosphoserine.

Widely expressed. Also found in tumors originating from parathyroid gland, colon, stomach, bladder, uterus and prostate.

The sequence is that of Gypsy retrotransposon integrase-like protein 1 (GIN1) from Homo sapiens (Human).